We begin with the raw amino-acid sequence, 710 residues long: E3 ubiquitin-protein ligase TRIM9 (710 aa).

An RING-type zinc finger spans residues 10–50 (CPVCGSFYREPIILPCSHNICQACARNILVQTPESESPQSR). Position 41 is a phosphothreonine (Thr41). Residues Ser44, Ser46, Ser49, and Ser53 each carry the phosphoserine modification. B box-type zinc fingers lie at residues 163-212 (AAAL…LVPP) and 224-266 (RKVS…VKAL). 8 residues coordinate Zn(2+): Cys168, Cys171, Cys193, His198, Cys229, His232, Cys252, and His258. Residues 273–340 (HKSQLSQALN…KAQLLARVNK (68 aa)) adopt a coiled-coil conformation. The COS domain occupies 374 to 432 (IKENDPSGFLQISDALIRRVHLTEDQWGKGTLTPRMTTDFDLSLDNSPLLQSIHQLDFV). In terms of domain architecture, Fibronectin type-III spans 440–535 (VPATPILQLE…KTLVLQTSEV (96 aa)). The B30.2/SPRY domain occupies 533–702 (SEVAWFAFDP…LHTGLQVPDF (170 aa)).

It belongs to the TRIM/RBCC family. In terms of assembly, interacts with SNAP25. Auto-ubiquitinated.

The protein resides in the cytoplasm. It localises to the cell projection. It is found in the dendrite. The protein localises to the cytoplasmic vesicle. Its subcellular location is the secretory vesicle. The protein resides in the synaptic vesicle. It localises to the synapse. It is found in the cytoskeleton. It carries out the reaction S-ubiquitinyl-[E2 ubiquitin-conjugating enzyme]-L-cysteine + [acceptor protein]-L-lysine = [E2 ubiquitin-conjugating enzyme]-L-cysteine + N(6)-ubiquitinyl-[acceptor protein]-L-lysine.. Its pathway is protein modification; protein ubiquitination. In terms of biological role, E3 ubiquitin-protein ligase which ubiquitinates itself in cooperation with an E2 enzyme UBE2D2/UBC4 and serves as a targeting signal for proteasomal degradation. May play a role in regulation of neuronal functions. May act as a regulator of synaptic vesicle exocytosis by controlling the availability of SNAP25 for the SNARE complex formation. The protein is E3 ubiquitin-protein ligase TRIM9 (TRIM9) of Bos taurus (Bovine).